Consider the following 708-residue polypeptide: Serine/threonine-protein kinase Nek5 (708 aa).

The region spanning 4-259 (YDVIKAIGQG…INSILKRPFL (256 aa)) is the Protein kinase domain. ATP contacts are provided by residues 10–18 (IGQGAFGKA) and K33. D128 functions as the Proton acceptor in the catalytic mechanism. 2 disordered regions span residues 376 to 403 (SYHPIPQENTGVEDYGQETRHGPSPSQW) and 423 to 454 (KQLGLRPSSAEPNYNQRQELRSNGEEPRFQEL). Residues 440–454 (QELRSNGEEPRFQEL) are compositionally biased toward basic and acidic residues.

The protein belongs to the protein kinase superfamily. NEK Ser/Thr protein kinase family. NIMA subfamily. It depends on Mg(2+) as a cofactor.

It is found in the cell projection. It localises to the cilium. Its subcellular location is the flagellum. It carries out the reaction L-seryl-[protein] + ATP = O-phospho-L-seryl-[protein] + ADP + H(+). It catalyses the reaction L-threonyl-[protein] + ATP = O-phospho-L-threonyl-[protein] + ADP + H(+). The protein is Serine/threonine-protein kinase Nek5 (NEK5) of Homo sapiens (Human).